Here is a 416-residue protein sequence, read N- to C-terminus: Neurotensin receptor type 2 (416 aa).

At 1–32 the chain is on the extracellular side; that stretch reads METSSPWPPRPSPSAGLSLEARLGVDTRLWAK. Residues 33–55 traverse the membrane as a helical segment; sequence VLFTALYSLIFAFGTAGNALSVH. Residues 56–64 lie on the Cytoplasmic side of the membrane; the sequence is VVLKARAGR. Residues 65-87 form a helical membrane-spanning segment; sequence PGRLRYHVLSLALSALLLLLVSM. At 88–109 the chain is on the extracellular side; sequence PMELYNFVWSHYPWVFGDLGCR. A disulfide bridge connects residues Cys108 and Cys194. The helical transmembrane segment at 110 to 131 threads the bilayer; it reads GYYFVRELCAYATVLSVASLSA. Over 132-154 the chain is Cytoplasmic; it reads ERCLAVCQPLRARRLLTPRRTRR. The chain crosses the membrane as a helical span at residues 155–176; the sequence is LLSLVWVASLGLALPMAVIMGQ. The Extracellular portion of the chain corresponds to 177-216; it reads KHEVESADGEPEPASRVCTVLVSRATLQVFIQVNVLVSFA. The chain crosses the membrane as a helical span at residues 217-237; that stretch reads LPLALTAFLNGITVNHLMALY. At 238 to 297 the chain is on the cytoplasmic side; that stretch reads SQVPSASAQVSSIPSRLELLSEEGLLGFITWRKTLSLGVQASLVRHKDASQIRSLQHSAQ. A helical membrane pass occupies residues 298-318; it reads VLRAIVAVYVICWLPYHARRL. Over 319–337 the chain is Extracellular; it reads MYCYIPDDGWTNELYDFYH. The chain crosses the membrane as a helical span at residues 338–358; sequence YFYMVTNTLFYVSSAVTPILY. Residues 359–416 are Cytoplasmic-facing; it reads NAVSSSFRKLFLESLGSLCGEQHSLVPLPQEAPESTTSTYSFRLWGSPRNPSLGEIQV. Residue Cys377 is the site of S-palmitoyl cysteine attachment. Ser410 is modified (phosphoserine).

This sequence belongs to the G-protein coupled receptor 1 family. Neurotensin receptor subfamily. NTSR2 sub-subfamily. In terms of tissue distribution, abundant in cortex and hypothalamus, and lower levels seen in the heart and intestine.

It is found in the cell membrane. Receptor for the tridecapeptide neurotensin. It is associated with G proteins that activate a phosphatidylinositol-calcium second messenger system. The sequence is that of Neurotensin receptor type 2 (Ntsr2) from Rattus norvegicus (Rat).